Reading from the N-terminus, the 838-residue chain is Ribonuclease Z (838 aa).

Ser-824 is subject to Phosphoserine.

It belongs to the RNase Z family. As to quaternary structure, homodimer. Zn(2+) serves as cofactor.

The protein resides in the cytoplasm. The protein localises to the nucleus. It catalyses the reaction Endonucleolytic cleavage of RNA, removing extra 3' nucleotides from tRNA precursor, generating 3' termini of tRNAs. A 3'-hydroxy group is left at the tRNA terminus and a 5'-phosphoryl group is left at the trailer molecule.. Zinc phosphodiesterase, which displays some tRNA 3'-processing endonuclease activity. Probably involved in tRNA maturation, by removing a 3'-trailer from precursor tRNA. The chain is Ribonuclease Z (TRZ1) from Saccharomyces cerevisiae (strain ATCC 204508 / S288c) (Baker's yeast).